The following is a 308-amino-acid chain: Serpentine receptor class V-1 (308 aa).

7 helical membrane passes run 15–35 (VSTAISLVCLPINILFVYILF), 46–68 (PFFRLCIHLSIADILMELFSTFF), 88–108 (VVPIAGMQYLGHAQAFGIIFI), 135–155 (LLLIQWITPLFFMAPLFSTDF), 184–204 (AMVDGILINLIVLLLYGAIFI), 222–242 (LALSAFIIFICYLALGVCSLL), and 256–276 (TMWFVVNDVLCNSSALVLLAL).

It belongs to the nematode receptor-like protein srv family.

It is found in the membrane. The polypeptide is Serpentine receptor class V-1 (srv-1) (Caenorhabditis elegans).